The following is a 200-amino-acid chain: Dephospho-CoA kinase (200 aa).

Positions 3-200 constitute a DPCK domain; sequence RIGLTGGIGS…LIAEILTRIK (198 aa). Residue 11–16 participates in ATP binding; that stretch reads GSGKST.

The protein belongs to the CoaE family.

Its subcellular location is the cytoplasm. It carries out the reaction 3'-dephospho-CoA + ATP = ADP + CoA + H(+). The protein operates within cofactor biosynthesis; coenzyme A biosynthesis; CoA from (R)-pantothenate: step 5/5. Its function is as follows. Catalyzes the phosphorylation of the 3'-hydroxyl group of dephosphocoenzyme A to form coenzyme A. The sequence is that of Dephospho-CoA kinase from Corynebacterium efficiens (strain DSM 44549 / YS-314 / AJ 12310 / JCM 11189 / NBRC 100395).